Reading from the N-terminus, the 76-residue chain is Sec-independent protein translocase protein TatA (76 aa).

The helical transmembrane segment at 1–21 (MGSFSIWHWLIVLVIVMLIFG) threads the bilayer. A disordered region spans residues 47–76 (NADKPAEEAQPTQQVGGHTIDVEVKEKTKS). Over residues 66–76 (IDVEVKEKTKS) the composition is skewed to basic and acidic residues.

The protein belongs to the TatA/E family. As to quaternary structure, the Tat system comprises two distinct complexes: a TatABC complex, containing multiple copies of TatA, TatB and TatC subunits, and a separate TatA complex, containing only TatA subunits. Substrates initially bind to the TatABC complex, which probably triggers association of the separate TatA complex to form the active translocon.

It localises to the cell inner membrane. In terms of biological role, part of the twin-arginine translocation (Tat) system that transports large folded proteins containing a characteristic twin-arginine motif in their signal peptide across membranes. TatA could form the protein-conducting channel of the Tat system. The polypeptide is Sec-independent protein translocase protein TatA (Dechloromonas aromatica (strain RCB)).